The chain runs to 566 residues: Proline--tRNA ligase (566 aa).

It belongs to the class-II aminoacyl-tRNA synthetase family. ProS type 1 subfamily. Homodimer.

The protein resides in the cytoplasm. It catalyses the reaction tRNA(Pro) + L-proline + ATP = L-prolyl-tRNA(Pro) + AMP + diphosphate. In terms of biological role, catalyzes the attachment of proline to tRNA(Pro) in a two-step reaction: proline is first activated by ATP to form Pro-AMP and then transferred to the acceptor end of tRNA(Pro). As ProRS can inadvertently accommodate and process non-cognate amino acids such as alanine and cysteine, to avoid such errors it has two additional distinct editing activities against alanine. One activity is designated as 'pretransfer' editing and involves the tRNA(Pro)-independent hydrolysis of activated Ala-AMP. The other activity is designated 'posttransfer' editing and involves deacylation of mischarged Ala-tRNA(Pro). The misacylated Cys-tRNA(Pro) is not edited by ProRS. This chain is Proline--tRNA ligase, found in Staphylococcus haemolyticus (strain JCSC1435).